The primary structure comprises 420 residues: Protein translocase subunit SecY (420 aa).

10 helical membrane-spanning segments follow: residues 9 to 29 (ILIT…PIPG), 61 to 81 (LSII…MELL), 104 to 124 (IVRY…SVGL), 141 to 161 (VFMI…MWIG), 173 to 193 (ISLI…SGTF), 203 to 223 (ILML…IIYV), 257 to 277 (LSGV…STIL), 300 to 320 (YNIL…SIVF), 355 to 375 (KLTL…WILV), and 377 to 397 (AMGV…QVAI).

This sequence belongs to the SecY/SEC61-alpha family. Component of the Sec protein translocase complex. Heterotrimer consisting of SecY, SecE and SecG subunits. The heterotrimers can form oligomers, although 1 heterotrimer is thought to be able to translocate proteins. Interacts with the ribosome. Interacts with SecDF, and other proteins may be involved. Interacts with SecA.

The protein resides in the cell inner membrane. Functionally, the central subunit of the protein translocation channel SecYEG. Consists of two halves formed by TMs 1-5 and 6-10. These two domains form a lateral gate at the front which open onto the bilayer between TMs 2 and 7, and are clamped together by SecE at the back. The channel is closed by both a pore ring composed of hydrophobic SecY resides and a short helix (helix 2A) on the extracellular side of the membrane which forms a plug. The plug probably moves laterally to allow the channel to open. The ring and the pore may move independently. The sequence is that of Protein translocase subunit SecY from Helicobacter pylori (strain ATCC 700392 / 26695) (Campylobacter pylori).